A 332-amino-acid chain; its full sequence is Glycerol-3-phosphate dehydrogenase [NAD(P)+] (332 aa).

Positions 15, 35, and 108 each coordinate NADPH. Positions 108, 137, and 139 each coordinate sn-glycerol 3-phosphate. Residue A141 coordinates NADPH. Positions 192, 245, 255, 256, and 257 each coordinate sn-glycerol 3-phosphate. Catalysis depends on K192, which acts as the Proton acceptor. R256 is a binding site for NADPH. The NADPH site is built by L278 and E280.

It belongs to the NAD-dependent glycerol-3-phosphate dehydrogenase family.

The protein resides in the cytoplasm. The catalysed reaction is sn-glycerol 3-phosphate + NAD(+) = dihydroxyacetone phosphate + NADH + H(+). It catalyses the reaction sn-glycerol 3-phosphate + NADP(+) = dihydroxyacetone phosphate + NADPH + H(+). It functions in the pathway membrane lipid metabolism; glycerophospholipid metabolism. Its function is as follows. Catalyzes the reduction of the glycolytic intermediate dihydroxyacetone phosphate (DHAP) to sn-glycerol 3-phosphate (G3P), the key precursor for phospholipid synthesis. This Methylobacterium radiotolerans (strain ATCC 27329 / DSM 1819 / JCM 2831 / NBRC 15690 / NCIMB 10815 / 0-1) protein is Glycerol-3-phosphate dehydrogenase [NAD(P)+].